A 163-amino-acid polypeptide reads, in one-letter code: Nitrogen regulatory protein (163 aa).

A PTS EIIA type-2 domain is found at 12 to 156 (SVLNRECTRS…EELYQIITDT (145 aa)). Catalysis depends on His73, which acts as the Tele-phosphohistidine intermediate.

It is found in the cytoplasm. In terms of biological role, seems to have a role in regulating nitrogen assimilation. This chain is Nitrogen regulatory protein (ptsN), found in Escherichia coli (strain K12).